Reading from the N-terminus, the 258-residue chain is Isoprenyl transferase (258 aa).

Aspartate 38 is a catalytic residue. Position 38 (aspartate 38) interacts with Mg(2+). Substrate is bound by residues 39–42 (GNGR), tryptophan 43, arginine 51, histidine 55, and 83–85 (STE). Asparagine 86 functions as the Proton acceptor in the catalytic mechanism. Substrate contacts are provided by residues tryptophan 87, arginine 89, arginine 206, and 212-214 (RIS). Glutamate 225 serves as a coordination point for Mg(2+).

It belongs to the UPP synthase family. In terms of assembly, homodimer. The cofactor is Mg(2+).

Its function is as follows. Catalyzes the condensation of isopentenyl diphosphate (IPP) with allylic pyrophosphates generating different type of terpenoids. The sequence is that of Isoprenyl transferase from Bacillus thuringiensis subsp. konkukian (strain 97-27).